The chain runs to 942 residues: Isoleucine--tRNA ligase (942 aa).

A 'HIGH' region motif is present at residues 58 to 68 (PYVNGSIHLGH). Glu-564 is a binding site for L-isoleucyl-5'-AMP. The 'KMSKS' region signature appears at 605–609 (KMSKS). Lys-608 provides a ligand contact to ATP. Zn(2+)-binding residues include Cys-905, Cys-908, Cys-925, and Cys-928.

This sequence belongs to the class-I aminoacyl-tRNA synthetase family. IleS type 1 subfamily. As to quaternary structure, monomer. Zn(2+) is required as a cofactor.

It localises to the cytoplasm. The enzyme catalyses tRNA(Ile) + L-isoleucine + ATP = L-isoleucyl-tRNA(Ile) + AMP + diphosphate. Functionally, catalyzes the attachment of isoleucine to tRNA(Ile). As IleRS can inadvertently accommodate and process structurally similar amino acids such as valine, to avoid such errors it has two additional distinct tRNA(Ile)-dependent editing activities. One activity is designated as 'pretransfer' editing and involves the hydrolysis of activated Val-AMP. The other activity is designated 'posttransfer' editing and involves deacylation of mischarged Val-tRNA(Ile). The chain is Isoleucine--tRNA ligase from Blochmanniella pennsylvanica (strain BPEN).